The following is a 366-amino-acid chain: Putative ankyrin repeat protein RBE_0601 (366 aa).

ANK repeat units lie at residues 39–68, 94–124, 131–160, 162–186, 210–239, and 250–280; these read KHGT…DINE, LPDE…DVNT, HGGA…IASQ, VISA…TAHD, KSSN…NPNA, and IALS…DTSK.

This Rickettsia bellii (strain RML369-C) protein is Putative ankyrin repeat protein RBE_0601.